The primary structure comprises 725 residues: Methionine--tRNA ligase (725 aa).

The short motif at 27–37 (PYANGQIHIGH) is the 'HIGH' region element. Zn(2+)-binding residues include Cys-158, Cys-161, Cys-171, and Cys-174. The 'KMSKS' region motif lies at 348 to 352 (KMSKS). Residue Lys-351 coordinates ATP. One can recognise a tRNA-binding domain in the interval 619 to 725 (DFAKIDLRIA…SGAKPGMRVK (107 aa)).

Belongs to the class-I aminoacyl-tRNA synthetase family. MetG type 1 subfamily. Homodimer. Zn(2+) serves as cofactor.

The protein resides in the cytoplasm. It catalyses the reaction tRNA(Met) + L-methionine + ATP = L-methionyl-tRNA(Met) + AMP + diphosphate. Its function is as follows. Is required not only for elongation of protein synthesis but also for the initiation of all mRNA translation through initiator tRNA(fMet) aminoacylation. In Burkholderia pseudomallei (strain 668), this protein is Methionine--tRNA ligase.